A 544-amino-acid chain; its full sequence is Chaperonin GroEL 1 (544 aa).

ATP is bound by residues 29 to 32 (TLGP), Lys-50, 86 to 90 (DGTTT), Gly-414, and Asp-494.

This sequence belongs to the chaperonin (HSP60) family. As to quaternary structure, forms a cylinder of 14 subunits composed of two heptameric rings stacked back-to-back. Interacts with the co-chaperonin GroES.

It localises to the cytoplasm. The catalysed reaction is ATP + H2O + a folded polypeptide = ADP + phosphate + an unfolded polypeptide.. Together with its co-chaperonin GroES, plays an essential role in assisting protein folding. The GroEL-GroES system forms a nano-cage that allows encapsulation of the non-native substrate proteins and provides a physical environment optimized to promote and accelerate protein folding. The chain is Chaperonin GroEL 1 from Psychromonas ingrahamii (strain DSM 17664 / CCUG 51855 / 37).